We begin with the raw amino-acid sequence, 92 residues long: Small ribosomal subunit protein bS18 (92 aa).

The interval 1–28 (MTQQGNSGERKPRGKGPKRPRKPKVDPF) is disordered. A compositionally biased stretch (basic residues) spans 12 to 22 (PRGKGPKRPRK).

This sequence belongs to the bacterial ribosomal protein bS18 family. In terms of assembly, part of the 30S ribosomal subunit. Forms a tight heterodimer with protein bS6.

Binds as a heterodimer with protein bS6 to the central domain of the 16S rRNA, where it helps stabilize the platform of the 30S subunit. The polypeptide is Small ribosomal subunit protein bS18 (Deinococcus radiodurans (strain ATCC 13939 / DSM 20539 / JCM 16871 / CCUG 27074 / LMG 4051 / NBRC 15346 / NCIMB 9279 / VKM B-1422 / R1)).